A 737-amino-acid chain; its full sequence is MFPLLHFIVLIDVKDFPLTEGSTITPLCQKGYFPCGNLTKCLPRAFHCDGVDDCGNGADEDNCGDTSGWATIFGTVHGNANNVALTQECFLNQYPQPCDCKGTELECINADLRAVPVISSNTTLLSLKKNKIHSLPDKVFTKYTQLKQIFLQHNCITHISRKAFFGLHNLQILYLSHNCITTLRPGVFKDLHQLTWLILDDNPITRISQQLFTGLKSLFFLSMVNNYLEALPKQMCAQMPQLNWMDLEGNGIKYLTNSSFLSCNSLTVLFLPRNQIDFVPEKTFSSLKNLGELDLSSNMIMELPPEIFKDLKLLQKLNLSSNPLLYLHKNQFESLKQLQSLDLERIEIPNINTRMFQPMMNLSHIYFKNFRYCSYAPHVRICMPLTDGISSFEDLLANNILRIFVWVIAFITCFGNLFVIGMRSFIKAENTTHATSIKILCCADCLMGVYLFFIGFFDIKYRGQYQKYALLWMESLQCRLMGFLAMLSTEVSVLLLTYLTLEKFLAIVFPFSNIRPGKWQTMVILICIWIVGFLIAVIPFWKEDYFGNFYGKNGVCFPLYYDQTEDIGSKGYSLGIFLGVNLLAFLIIVFSYTIMFCSIKKTALQTSEVRNPIGREVAVANRFFFIVFSDAICWIPVFVIKILSLFRVEIPGTITSWIVIFFLPVNSALNPILYTLTTSFFKDKLKQLLHKHRRKSIFKTKKKSLSTSIVWTDDSSSLKLGVLNKITLGDSIVKPIS.

At 1–399 (MFPLLHFIVL…SSFEDLLANN (399 aa)) the chain is on the extracellular side. Residues 27-64 (LCQKGYFPCGNLTKCLPRAFHCDGVDDCGNGADEDNCG) form the LDL-receptor class A domain. 3 disulfide bridges follow: cysteine 28–cysteine 41, cysteine 35–cysteine 54, and cysteine 48–cysteine 63. Asparagine 37 carries N-linked (GlcNAc...) asparagine glycosylation. N-linked (GlcNAc...) asparagine glycosylation occurs at asparagine 121. LRR repeat units lie at residues 121–142 (NTTL…VFTK), 145–166 (QLKQ…AFFG), 169–190 (NLQI…VFKD), 193–214 (QLTW…LFTG), 217–238 (SLFF…MCAQ), 241–262 (QLNW…SFLS), 265–286 (SLTV…TFSS), 289–310 (NLGE…IFKD), 313–334 (LLQK…QFES), and 337–358 (QLQS…MFQP). An N-linked (GlcNAc...) asparagine glycan is attached at asparagine 257. The N-linked (GlcNAc...) asparagine glycan is linked to asparagine 318. Asparagine 361 is a glycosylation site (N-linked (GlcNAc...) asparagine). Residues 400–420 (ILRIFVWVIAFITCFGNLFVI) traverse the membrane as a helical segment. At 421 to 438 (GMRSFIKAENTTHATSIK) the chain is on the cytoplasmic side. Residues 439 to 459 (ILCCADCLMGVYLFFIGFFDI) traverse the membrane as a helical segment. The Extracellular portion of the chain corresponds to 460–478 (KYRGQYQKYALLWMESLQC). Cysteines 478 and 556 form a disulfide. Residues 479–501 (RLMGFLAMLSTEVSVLLLTYLTL) form a helical membrane-spanning segment. Over 502-520 (EKFLAIVFPFSNIRPGKWQ) the chain is Cytoplasmic. A helical membrane pass occupies residues 521 to 541 (TMVILICIWIVGFLIAVIPFW). The Extracellular segment spans residues 542–575 (KEDYFGNFYGKNGVCFPLYYDQTEDIGSKGYSLG). A helical transmembrane segment spans residues 576-596 (IFLGVNLLAFLIIVFSYTIMF). Over 597-622 (CSIKKTALQTSEVRNPIGREVAVANR) the chain is Cytoplasmic. Residues 623–643 (FFFIVFSDAICWIPVFVIKIL) form a helical membrane-spanning segment. Over 644–653 (SLFRVEIPGT) the chain is Extracellular. A helical membrane pass occupies residues 654-674 (ITSWIVIFFLPVNSALNPILY). Topologically, residues 675–737 (TLTTSFFKDK…LGDSIVKPIS (63 aa)) are cytoplasmic.

The protein belongs to the G-protein coupled receptor 1 family.

It localises to the cell membrane. Receptor for relaxin. The activity of this receptor is mediated by G proteins leading to stimulation of adenylate cyclase and an increase of cAMP. May also be a receptor for Leydig insulin-like peptide (INSL3). This is Relaxin receptor 2 (RXFP2) from Canis lupus familiaris (Dog).